The primary structure comprises 284 residues: MEMO1 family protein MMP1387 (284 aa).

Belongs to the MEMO1 family.

In Methanococcus maripaludis (strain DSM 14266 / JCM 13030 / NBRC 101832 / S2 / LL), this protein is MEMO1 family protein MMP1387.